A 480-amino-acid chain; its full sequence is Molybdate-anion transporter (480 aa).

12 consecutive transmembrane segments (helical) span residues 1–21 (MFVT…GLEL), 44–63 (ATFL…QGPY), 78–98 (IAIL…FSGW), 129–149 (FVLI…TTTF), 177–197 (TWNH…AEWL), 199–219 (LGPV…AWFV), 274–294 (VMLL…FIFL), 304–324 (SPLG…SLLF), 339–359 (VLCV…FSTV), 369–389 (FLAF…LNFL), 401–421 (SVLA…LLAL), and 441–461 (FGGC…LFTL).

It belongs to the major facilitator superfamily.

The protein localises to the cell membrane. Mediates high-affinity intracellular uptake of the rare oligo-element molybdenum. The polypeptide is Molybdate-anion transporter (mfsd5) (Takifugu rubripes (Japanese pufferfish)).